Reading from the N-terminus, the 66-residue chain is Surface composition regulator (66 aa).

The protein belongs to the GlgS family.

Major determinant of cell surface composition. Negatively regulates motility, adhesion and synthesis of biofilm exopolysaccharides. This is Surface composition regulator from Escherichia coli O139:H28 (strain E24377A / ETEC).